A 431-amino-acid chain; its full sequence is Tol-Pal system protein TolB (431 aa).

The N-terminal stretch at 1–26 (MSLMTKLGFRALVASCLIAAGGAANA) is a signal peptide. Residues 411-431 (PQILSVQGGSVREPSWGPFMQ) form a disordered region.

Belongs to the TolB family. As to quaternary structure, the Tol-Pal system is composed of five core proteins: the inner membrane proteins TolA, TolQ and TolR, the periplasmic protein TolB and the outer membrane protein Pal. They form a network linking the inner and outer membranes and the peptidoglycan layer.

The protein resides in the periplasm. Its function is as follows. Part of the Tol-Pal system, which plays a role in outer membrane invagination during cell division and is important for maintaining outer membrane integrity. This chain is Tol-Pal system protein TolB, found in Burkholderia vietnamiensis (strain G4 / LMG 22486) (Burkholderia cepacia (strain R1808)).